The chain runs to 314 residues: Olfactory receptor 6C6 (314 aa).

Topologically, residues 1–24 (MKNKSMEIEFILLGLTDDPQLQIV) are extracellular. The N-linked (GlcNAc...) asparagine glycan is linked to N3. A helical membrane pass occupies residues 25–45 (IFLFLFLNYTLSLMGNLIIII). At 46-63 (LTLLDPRLKTPMYFFLRN) the chain is on the cytoplasmic side. Residues 64 to 84 (FSFLEVIFTTVCIPRFLITIV) traverse the membrane as a helical segment. At 85–95 (TRDKTISYNNC) the chain is on the extracellular side. C95 and C177 are joined by a disulfide. The helical transmembrane segment at 96 to 116 (ATQLFFILLPGVTEFYLLAAM) threads the bilayer. The Cytoplasmic portion of the chain corresponds to 117–141 (SYDRYVAICKPLHYPIIMSSKVCYQ). A helical membrane pass occupies residues 142–162 (LVLSSWVTGFLIIFPPLVMGL). The Extracellular segment spans residues 163 to 199 (KLDFCASKTIDHFMCETSPILQISCTDTHVLELMSFT). A helical membrane pass occupies residues 200–220 (LAVVTLVVTLVLVILSYTCII). Over 221–237 (KTILKFSSAQQRNKAFS) the chain is Cytoplasmic. Residues 238–258 (TCTSHMIVVSMTYGSCIFMYI) form a helical membrane-spanning segment. The Extracellular portion of the chain corresponds to 259–269 (KPSAKERVTVS). Residues 270–290 (KGVALLYTSIAPLLNPFIYTL) traverse the membrane as a helical segment. Residues 291–314 (RNQQVKEVFWDVLQKNLCFSKRPF) are Cytoplasmic-facing.

It belongs to the G-protein coupled receptor 1 family.

The protein localises to the cell membrane. In terms of biological role, odorant receptor. This is Olfactory receptor 6C6 (OR6C6) from Homo sapiens (Human).